A 231-amino-acid chain; its full sequence is 7-cyano-7-deazaguanine synthase (231 aa).

8-18 (FSGGQDSTTCL) lines the ATP pocket. Positions 188, 197, 200, and 203 each coordinate Zn(2+).

The protein belongs to the QueC family. Requires Zn(2+) as cofactor.

The enzyme catalyses 7-carboxy-7-deazaguanine + NH4(+) + ATP = 7-cyano-7-deazaguanine + ADP + phosphate + H2O + H(+). The protein operates within purine metabolism; 7-cyano-7-deazaguanine biosynthesis. In terms of biological role, catalyzes the ATP-dependent conversion of 7-carboxy-7-deazaguanine (CDG) to 7-cyano-7-deazaguanine (preQ(0)). This chain is 7-cyano-7-deazaguanine synthase, found in Salmonella agona (strain SL483).